A 462-amino-acid chain; its full sequence is Kinetochore protein nsk1 (462 aa).

Residues 104 to 120 (PSKNHETSLSPSKSTID) are compositionally biased toward polar residues. 3 disordered regions span residues 104 to 161 (PSKN…CPGI), 180 to 240 (EKYG…PLRT), and 320 to 462 (NQLF…NIQS). The segment covering 121–138 (NNERKLDNEIDNYKHDVK) has biased composition (basic and acidic residues). Over residues 146 to 156 (GKTSNPSQGTT) the composition is skewed to polar residues. The segment covering 180–189 (EKYGKTDLGK) has biased composition (basic and acidic residues). The span at 229 to 240 (KNRSSTFSPLRT) shows a compositional bias: polar residues. The segment covering 324–333 (KSEEEKDPVG) has biased composition (basic and acidic residues). Over residues 422–444 (WPQNLAKNNINSEPNTPTKSNID) the composition is skewed to polar residues. Over residues 449–462 (HSARAHKTRKNIQS) the composition is skewed to basic residues.

In terms of assembly, interacts with dlc1. The dlc1-nsk1 complex seems to oligomerize in chain-like structures. Also binds directly to spindle microtubules. In terms of processing, phosphorylated by cdk1 at prometaphase arrest. Phosphorylation prevents nsk1 kinetochore and spindle targeting. Dephosphorylated by clp1 at anaphase onset controls its relocalization.

The protein localises to the nucleus. The protein resides in the nucleolus. Its subcellular location is the cytoplasm. It is found in the cytoskeleton. It localises to the spindle. The protein localises to the chromosome. The protein resides in the centromere. Its subcellular location is the kinetochore. Its function is as follows. Ensures chromosome alignment and accurate chromosome segregation during mitosis. Promotes proper kinetochore-microtubule (k-MT) interactions during anaphase B. The phosphorylation status of nsk1 affects the proper k-MT coupling, ensuring that it interacts stably only at the correct time during mitosis. This Schizosaccharomyces pombe (strain 972 / ATCC 24843) (Fission yeast) protein is Kinetochore protein nsk1 (nsk1).